Consider the following 249-residue polypeptide: Pulmonary surfactant-associated protein A (249 aa).

The N-terminal stretch at 1-20 is a signal peptide; sequence MLRWPLALTFLLLAVSGLEC. The 73-residue stretch at 28–100 folds into the Collagen-like domain; the sequence is ASPGIPGTPG…PGERGPPGLP (73 aa). The segment at 29-102 is disordered; it reads SPGIPGTPGS…ERGPPGLPAH (74 aa). 4-hydroxyproline is present on residues Pro30, Pro33, Pro36, Pro42, Pro54, Pro57, Pro63, and Pro70. Residues 42–51 show a composition bias toward basic and acidic residues; that stretch reads PGRDGRDGIK. Positions 84–93 are enriched in basic and acidic residues; sequence ERGEKGEPGE. The C-type lectin domain maps to 133–249; that stretch reads AVGEKVFSTN…QQYRLAICEF (117 aa). Disulfide bonds link Cys155–Cys247 and Cys225–Cys239. Residue Asn208 is glycosylated (N-linked (GlcNAc...) asparagine). Ca(2+) contacts are provided by Glu216, Arg218, Asn235, and Asp236.

It belongs to the SFTPA family. Oligomeric complex of 6 set of homotrimers.

It localises to the secreted. Its subcellular location is the extracellular space. It is found in the extracellular matrix. The protein resides in the surface film. In presence of calcium ions, it binds to surfactant phospholipids and contributes to lower the surface tension at the air-liquid interface in the alveoli of the mammalian lung and is essential for normal respiration. Enhances the expression of MYO18A/SP-R210 on alveolar macrophages. The chain is Pulmonary surfactant-associated protein A (SFTPA1) from Sus scrofa (Pig).